A 156-amino-acid chain; its full sequence is Ribonuclease pancreatic (156 aa).

The signal sequence occupies residues 1-28 (MALEKSLALLPLLVLVLLVLGWVQPSLG). Positions 35 and 38 each coordinate substrate. His-40 serves as the catalytic Proton acceptor. 4 cysteine pairs are disulfide-bonded: Cys-54–Cys-112, Cys-68–Cys-123, Cys-86–Cys-138, and Cys-93–Cys-100. Residue Asn-62 is glycosylated (N-linked (GlcNAc...) asparagine). 69–73 (KPVNT) serves as a coordination point for substrate. Asn-90 carries N-linked (GlcNAc...) asparagine glycosylation. Substrate contacts are provided by Lys-94 and Arg-113. His-147 serves as the catalytic Proton donor.

Belongs to the pancreatic ribonuclease family. Monomer. Interacts with and forms tight 1:1 complexes with RNH1. Dimerization of two such complexes may occur. Interaction with RNH1 inhibits this protein.

Its subcellular location is the secreted. The enzyme catalyses an [RNA] containing cytidine + H2O = an [RNA]-3'-cytidine-3'-phosphate + a 5'-hydroxy-ribonucleotide-3'-[RNA].. It carries out the reaction an [RNA] containing uridine + H2O = an [RNA]-3'-uridine-3'-phosphate + a 5'-hydroxy-ribonucleotide-3'-[RNA].. In terms of biological role, endonuclease that catalyzes the cleavage of RNA on the 3' side of pyrimidine nucleotides. Acts on single-stranded and double-stranded RNA. The protein is Ribonuclease pancreatic (RNASE1) of Lagothrix lagotricha (Brown woolly monkey).